Here is a 94-residue protein sequence, read N- to C-terminus: Probable small nuclear ribonucleoprotein E (94 aa).

Positions 17–92 constitute a Sm domain; it reads INLIFRYLQN…ITLIQNVSPT (76 aa).

Belongs to the snRNP Sm proteins family. In terms of assembly, core component of the spliceosomal U1, U2, U4 and U5 small nuclear ribonucleoproteins (snRNPs), the building blocks of the spliceosome. Interacts with the SMN complex.

It localises to the nucleus. The protein resides in the cytoplasm. It is found in the cytosol. Its function is as follows. Plays a role in pre-mRNA splicing as a core component of the spliceosomal U1, U2, U4 and U5 small nuclear ribonucleoproteins (snRNPs), the building blocks of the spliceosome. This is Probable small nuclear ribonucleoprotein E (SmE) from Drosophila melanogaster (Fruit fly).